The chain runs to 549 residues: Oxygen-dependent choline dehydrogenase (549 aa).

4–33 (DFVIIGSGSAGSAMAYRLSEDGRYSVIVIE) contributes to the FAD binding site. The active-site Proton acceptor is the His465.

This sequence belongs to the GMC oxidoreductase family. FAD serves as cofactor.

The catalysed reaction is choline + A = betaine aldehyde + AH2. It carries out the reaction betaine aldehyde + NAD(+) + H2O = glycine betaine + NADH + 2 H(+). It functions in the pathway amine and polyamine biosynthesis; betaine biosynthesis via choline pathway; betaine aldehyde from choline (cytochrome c reductase route): step 1/1. Its function is as follows. Involved in the biosynthesis of the osmoprotectant glycine betaine. Catalyzes the oxidation of choline to betaine aldehyde and betaine aldehyde to glycine betaine at the same rate. The sequence is that of Oxygen-dependent choline dehydrogenase from Brucella melitensis biotype 1 (strain ATCC 23456 / CCUG 17765 / NCTC 10094 / 16M).